We begin with the raw amino-acid sequence, 170 residues long: UPF0260 protein RPB_3505 (170 aa).

The protein belongs to the UPF0260 family.

This Rhodopseudomonas palustris (strain HaA2) protein is UPF0260 protein RPB_3505.